The sequence spans 382 residues: Pregnancy-associated glycoprotein 1 (382 aa).

The first 15 residues, M1 to C15, serve as a signal peptide directing secretion. Positions I16 to F53 are cleaved as a propeptide — activation peptide. N-linked (GlcNAc...) asparagine glycans are attached at residues N57 and N74. The Peptidase A1 domain maps to Y71–A379. C102 and C110 are joined by a disulfide. A glycan (N-linked (GlcNAc...) asparagine) is linked at N128. Intrachain disulfides connect C263/C267 and C305/C339.

It belongs to the peptidase A1 family. Trophoblast and placental tissue. Produced specifically in the invasive binucleate cells of the placenta.

It localises to the secreted. The protein localises to the extracellular space. Functionally, has no proteolytic activity. The protein is Pregnancy-associated glycoprotein 1 of Ovis aries (Sheep).